The sequence spans 320 residues: MRARLLIPILFSVFILSACGTLTGIPSHGGGKRFAVEQELVAASARAAVKDMDLQALHGRKVALYIATMGDQGSGSLTGGRYSIDALIRGEYINSPAVRTDYTYPRYETTAETTSGGLTGLTTSLSTLNAPALSRTQSDGSGSRSSLGLNIGGMGDYRNETLTTNPRDTAFLSHLVQTVFFLRGIDVVSPANADTDVFINIDVFGTIRNRTEMHLYNAETLKAQTKLEYFAVDRTNKKLLIKPKTNAFEAAYKENYALWMGPYKVSKGIKPTEGLMVDFSDIQPYGNHTGNSAPSVEADNSHEGYGYSDEAVRQHRQGQP.

Positions 1–18 are cleaved as a signal peptide; it reads MRARLLIPILFSVFILSA. A lipid anchor (N-palmitoyl cysteine) is attached at C19. The S-diacylglycerol cysteine moiety is linked to residue C19. The interval 287–320 is disordered; the sequence is NHTGNSAPSVEADNSHEGYGYSDEAVRQHRQGQP.

The protein belongs to the MafA family.

The protein localises to the cell outer membrane. The sequence is that of Adhesin MafA 1/4 (mafA1) from Neisseria gonorrhoeae (strain ATCC 700825 / FA 1090).